The chain runs to 285 residues: Probable endonuclease 4 (285 aa).

Residues histidine 69, histidine 109, glutamate 145, aspartate 179, histidine 182, histidine 216, aspartate 229, histidine 231, and glutamate 261 each coordinate Zn(2+).

Belongs to the AP endonuclease 2 family. Requires Zn(2+) as cofactor.

The enzyme catalyses Endonucleolytic cleavage to 5'-phosphooligonucleotide end-products.. Its function is as follows. Endonuclease IV plays a role in DNA repair. It cleaves phosphodiester bonds at apurinic or apyrimidinic (AP) sites, generating a 3'-hydroxyl group and a 5'-terminal sugar phosphate. This is Probable endonuclease 4 from Salmonella dublin (strain CT_02021853).